We begin with the raw amino-acid sequence, 100 residues long: Probable antitoxin MazE4 (100 aa).

The segment at 77–100 (PYESEAERSAARARRNARQQRSAQ) is disordered.

In terms of assembly, forms a complex with cognate toxin MazF4.

In terms of biological role, antitoxin component of a type II toxin-antitoxin (TA) system. Labile antitoxin that binds to cognate MazF4 toxin and counteracts its endoribonuclease activity. This Mycobacterium tuberculosis (strain CDC 1551 / Oshkosh) protein is Probable antitoxin MazE4 (mazE4).